The following is a 262-amino-acid chain: Phosphoribosylformylglycinamidine synthase subunit PurQ (262 aa).

One can recognise a Glutamine amidotransferase type-1 domain in the interval 2–238 (RIAVIQFPGT…FAWQLPRKHP (237 aa)). Catalysis depends on Cys87, which acts as the Nucleophile. Active-site residues include His223 and Glu225.

In terms of assembly, part of the FGAM synthase complex composed of 1 PurL, 1 PurQ and 2 PurS subunits.

Its subcellular location is the cytoplasm. The catalysed reaction is N(2)-formyl-N(1)-(5-phospho-beta-D-ribosyl)glycinamide + L-glutamine + ATP + H2O = 2-formamido-N(1)-(5-O-phospho-beta-D-ribosyl)acetamidine + L-glutamate + ADP + phosphate + H(+). It catalyses the reaction L-glutamine + H2O = L-glutamate + NH4(+). It participates in purine metabolism; IMP biosynthesis via de novo pathway; 5-amino-1-(5-phospho-D-ribosyl)imidazole from N(2)-formyl-N(1)-(5-phospho-D-ribosyl)glycinamide: step 1/2. Its function is as follows. Part of the phosphoribosylformylglycinamidine synthase complex involved in the purines biosynthetic pathway. Catalyzes the ATP-dependent conversion of formylglycinamide ribonucleotide (FGAR) and glutamine to yield formylglycinamidine ribonucleotide (FGAM) and glutamate. The FGAM synthase complex is composed of three subunits. PurQ produces an ammonia molecule by converting glutamine to glutamate. PurL transfers the ammonia molecule to FGAR to form FGAM in an ATP-dependent manner. PurS interacts with PurQ and PurL and is thought to assist in the transfer of the ammonia molecule from PurQ to PurL. This chain is Phosphoribosylformylglycinamidine synthase subunit PurQ, found in Methanothrix thermoacetophila (strain DSM 6194 / JCM 14653 / NBRC 101360 / PT) (Methanosaeta thermophila).